The following is a 215-amino-acid chain: MNKVYDWFEERLEIQAIADDITSKYVPPHVNIFYCLGGITLTCFLIQFATGFAMTFYYKPTVAEAFASVQYIMNEVNFGWLIRSIHKWSASMMVLMMILHVFRVYLTGGFKKPRELTWVTGVVLAVITVSFGVTGYSLPWDQVGYWAVKIVSGIPAAIPVVGDQLVELMRGGESVGQATLTRFYSLHTFVLPWSIAVFMLMHFLMIRKQGISGPL.

The chain crosses the membrane as a helical span at residues 32–52 (IFYCLGGITLTCFLIQFATGF). Residue Cys35 participates in heme c binding. Residues His86 and His100 each contribute to the heme b site. 3 helical membrane passes run 90 to 110 (ASMMVLMMILHVFRVYLTGGF), 116 to 136 (LTWVTGVVLAVITVSFGVTGY), and 186 to 206 (LHTFVLPWSIAVFMLMHFLMI). Positions 187 and 202 each coordinate heme b.

Belongs to the cytochrome b family. PetB subfamily. In terms of assembly, the 4 large subunits of the cytochrome b6-f complex are cytochrome b6, subunit IV (17 kDa polypeptide, PetD), cytochrome f and the Rieske protein, while the 4 small subunits are PetG, PetL, PetM and PetN. The complex functions as a dimer. Heme b serves as cofactor. The cofactor is heme c.

Its subcellular location is the cellular thylakoid membrane. In terms of biological role, component of the cytochrome b6-f complex, which mediates electron transfer between photosystem II (PSII) and photosystem I (PSI), cyclic electron flow around PSI, and state transitions. This chain is Cytochrome b6, found in Synechococcus elongatus.